The chain runs to 258 residues: Snake venom serine protease KN12 (258 aa).

The N-terminal stretch at 1-18 (MVLIRVLANLLILQLSYA) is a signal peptide. A propeptide spanning residues 19–24 (QRSSEL) is cleaved from the precursor. One can recognise a Peptidase S1 domain in the interval 25 to 249 (VIGGDECNIN…HLDWIQNIIA (225 aa)). 6 disulfide bridges follow: C31-C163, C50-C66, C98-C256, C142-C210, C174-C189, and C200-C225. H65 functions as the Charge relay system in the catalytic mechanism. Residue N103 is glycosylated (N-linked (GlcNAc...) asparagine). Catalysis depends on D110, which acts as the Charge relay system. Residues N121, N122, N154, and N170 are each glycosylated (N-linked (GlcNAc...) asparagine). The Charge relay system role is filled by S204. N251 is a glycosylation site (N-linked (GlcNAc...) asparagine).

Belongs to the peptidase S1 family. Snake venom subfamily. As to quaternary structure, monomer. In terms of tissue distribution, expressed by the venom gland.

It is found in the secreted. Its function is as follows. Snake venom serine protease that may act in the hemostasis system of the prey. This chain is Snake venom serine protease KN12, found in Trimeresurus stejnegeri (Chinese green tree viper).